Here is a 471-residue protein sequence, read N- to C-terminus: Thymidine phosphorylase (471 aa).

Over residues 1–10 (MAAPGTPPPS) the composition is skewed to pro residues. Residues 1–21 (MAAPGTPPPSASGGGGGEPRQ) form a disordered region. Position 6 is a phosphothreonine (threonine 6). Substrate-binding residues include histidine 102, arginine 188, serine 203, and lysine 207.

This sequence belongs to the thymidine/pyrimidine-nucleoside phosphorylase family. In terms of assembly, homodimer.

It carries out the reaction thymidine + phosphate = 2-deoxy-alpha-D-ribose 1-phosphate + thymine. It functions in the pathway pyrimidine metabolism; dTMP biosynthesis via salvage pathway; dTMP from thymine: step 1/2. In terms of biological role, catalyzes the reversible phosphorolysis of thymidine. The produced molecules are then utilized as carbon and energy sources or in the rescue of pyrimidine bases for nucleotide synthesis. This chain is Thymidine phosphorylase (Tymp), found in Mus musculus (Mouse).